A 452-amino-acid polypeptide reads, in one-letter code: Acetyl-CoA decarbonylase/synthase complex subunit delta (452 aa).

This sequence belongs to the CdhD family. In terms of assembly, heterodimer of delta and gamma chains. The ACDS complex is made up of alpha, epsilon, beta, gamma and delta chains with a probable stoichiometry of (alpha(2)epsilon(2))(4)-beta(8)-(gamma(1)delta(1))(8).

In terms of biological role, part of a complex that catalyzes the reversible cleavage of acetyl-CoA, allowing autotrophic growth from CO(2). Probably maintains the overall quaternary structure of the ACDS complex. In Archaeoglobus fulgidus (strain ATCC 49558 / DSM 4304 / JCM 9628 / NBRC 100126 / VC-16), this protein is Acetyl-CoA decarbonylase/synthase complex subunit delta.